Here is a 608-residue protein sequence, read N- to C-terminus: MQRRTFIKSISAMMATSTTLGCVSNSLATEKHVSITDFGLRPNSGDDAIPALQKALAYCKKHPGTSLIFPLGRYDFWSTKADRDFYYISNNDDGIKPVAFPLTEFKNLIIDGQGSRFVFHGGMVPVIVRESSGITLKNFSVDWDVPFHCEGIVEAVNKKESYVDLKIKDGFSYKVENGRFIFVGEGFENPVIKNLLEFDTKRQKQAYMARDNFQREIQPVTTEIRPGVLRLQGKYPTWPKVGNTLLLMQERRDWPAFSVQDTKNTWLENIDIHHSGAMGVIAQLADGIKLDNVNIHPKDGSGRTVSTTVDATHFINCKGHVVLKDCLFQGQIDDGTNVHGMYARVAEIHDSNTITFELVHYQQLGIDIFKPGSKVNFSDSVLNVFHDNVVDKTVRQDAKYWTVSFKEPLDTALKVDDVLDNMTWQPDHVMISGCRFTGNRARGALLTVSGKIIVENNYFSTPMMAIKIGSGGLKWYESGPVESVEIRNNIFDNCNYAKDSSAIDIVPGRKSKATTPYHQNVKIYQNEFRVYNERVLTTSRTQGISFVSNKIVKTSEYPERKSAFAPIHVERSSNFVYQGNDFIGFGHSELLFIDGQLVSGSGKLEGEG.

The first 21 residues, 1–21, serve as a signal peptide directing secretion; that stretch reads MQRRTFIKSISAMMATSTTLG. Cysteine 22 carries the N-palmitoyl cysteine lipid modification. Cysteine 22 is lipidated: S-diacylglycerol cysteine. PbH1 repeat units follow at residues 262 to 292, 318 to 340, 426 to 448, 449 to 470, and 481 to 507; these read TKNT…KLDN, KGHV…NVHG, PDHV…LLTV, SGKI…KIGS, and VESV…DIVP.

The protein belongs to the glycosyl hydrolase 110 family. A subfamily.

It localises to the cell membrane. It catalyses the reaction Hydrolysis of terminal, non-reducing branched (1-&gt;3)-alpha-D-galactosidic residues, producing free D-galactose.. The enzyme catalyses Hydrolysis of terminal, non-reducing alpha-D-galactose residues in alpha-D-galactosides, including galactose oligosaccharides, galactomannans and galactolipids.. Functionally, alpha-galactosidase that specifically removes branched alpha-1,3-linked galactose residues present in blood group B antigens. Has no activity toward linear alpha-1,3-linked galactose residues. The sequence is that of Alpha-1,3-galactosidase A (glaA) from Shewanella woodyi (strain ATCC 51908 / MS32).